The primary structure comprises 858 residues: Zinc finger protein ZXDC (858 aa).

3 disordered regions span residues 1 to 73, 85 to 108, and 142 to 175; these read MDLP…GGDS, DTHG…PAAA, and AAPS…GSPA. Over residues 59-68 the composition is skewed to pro residues; that stretch reads APGPSPPPPE. Over residues 142–152 the composition is skewed to low complexity; sequence AAPSLHPATTP. 10 C2H2-type zinc fingers span residues 176–200, 209–233, 239–263, 269–291, 298–322, 329–353, 359–383, 389–413, 419–443, and 452–477; these read YRCP…LLTH, FKCP…LQSH, FSCP…MKGH, FKCE…QRSH, YKCD…NRAH, FSCS…LRSH, FICD…KRKH, FTCP…SITH, FECP…SKKH, and SRCP…VRQH. Residues 624 to 634 show a composition bias toward polar residues; that stretch reads DSPALTPSNNL. The interval 624-652 is disordered; sequence DSPALTPSNNLTAPGTTPTSSDTTQETGS. Positions 635-651 are enriched in low complexity; that stretch reads TAPGTTPTSSDTTQETG. Residue Lys-661 forms a Glycyl lysine isopeptide (Lys-Gly) (interchain with G-Cter in SUMO) linkage. Disordered stretches follow at residues 671 to 714 and 727 to 751; these read DVVQ…LESG and VKKK…KVKG. Over residues 681 to 692 the composition is skewed to polar residues; it reads GPSQSVLSSSTE.

It belongs to the ZXD family. In terms of assembly, self-associates. Interacts with ZXDB and CIITA. In terms of processing, sumoylated at Lys-661 with SUMO1, SUMO2 and SUMO3; sumoylation enhances the activity of the transcriptional activation domain.

The protein resides in the nucleus. Cooperates with CIITA to promote transcription of MHC class I and MHC class II genes. This is Zinc finger protein ZXDC (Zxdc) from Mus musculus (Mouse).